The primary structure comprises 706 residues: Zinc transporter foi (706 aa).

Positions M1–C21 are cleaved as a signal peptide. The Extracellular segment spans residues Q22–W261. Positions Q40–E56 are enriched in polar residues. The interval Q40–P101 is disordered. N74, N119, N176, N182, N196, and N207 each carry an N-linked (GlcNAc...) asparagine glycan. The chain crosses the membrane as a helical span at residues I262 to I282. The Cytoplasmic segment spans residues P283–Y292. A helical membrane pass occupies residues I293–L313. Over L314–K329 the chain is Extracellular. The helical transmembrane segment at G330–I350 threads the bilayer. At S351 to S604 the chain is on the cytoplasmic side. 3 positions are modified to phosphoserine: S376, S377, and S381. The chain crosses the membrane as a helical span at residues A605–A625. Topologically, residues F626–D631 are extracellular. A helical membrane pass occupies residues V632–M652. Over M653–Q665 the chain is Cytoplasmic. A helical transmembrane segment spans residues F666 to Y686. The Extracellular segment spans residues E687–H706.

This sequence belongs to the ZIP transporter (TC 2.A.5) family. Glycosylated. As to expression, maternal foi has almost completely disappeared by embryonic stage 3 except in the pole cells. In stage 6 embryos, expression is enriched in the invaginating mesoderm. In stage 9 embryos, high levels in the anterior and posterior midgut primordia. In stage 14 embryos, broad expression with low levels in the epidermis.

The protein resides in the cell membrane. Required for the normal migration of longitudinal and peripheral glial cells. During larval development, required for the migration of the subretinal glia into the eye disk. During embryonic development, also controls the migration of muscle cells toward their attachment sites. Required in the mesoderm for the correct morphogenesis of embryonic gonad and for tracheal branch fusion during tracheal development. Shg may be cooperating with foi to mediate a common mechanism for gonad and tracheal morphogenesis. Acts as a zinc transporter in both yeast and mammalian cells. This is Zinc transporter foi from Drosophila melanogaster (Fruit fly).